The sequence spans 516 residues: Delta(24)-sterol reductase (516 aa).

Positions 1-22 (MEPAVSLAVCALLFLLWVRVKG) are cleaved as a signal peptide. Over 23–31 (LEFVLIHQR) the chain is Lumenal. The chain crosses the membrane as a helical span at residues 32–52 (WVFVCLFLLPLSLIFDIYYYV). At 53 to 516 (RAWVVFKLSS…YDKICKAARH (464 aa)) the chain is on the cytoplasmic side. An FAD-binding PCMH-type domain is found at 58 to 234 (FKLSSAPRLH…VAAEIRIIPA (177 aa)). 163–175 (TVGGLIMGTGIES) contributes to the FAD binding site.

Belongs to the FAD-binding oxidoreductase/transferase type 4 family. Interacts with DHCR7; this interaction regulates DHCR7 activity. Requires FAD as cofactor.

It localises to the endoplasmic reticulum membrane. Its subcellular location is the golgi apparatus membrane. It carries out the reaction cholesterol + NADP(+) = desmosterol + NADPH + H(+). The catalysed reaction is lanosterol + NADPH + H(+) = 24,25-dihydrolanosterol + NADP(+). It catalyses the reaction 5alpha-cholest-8-en-3beta-ol + NADP(+) = zymosterol + NADPH + H(+). It participates in steroid biosynthesis; cholesterol biosynthesis. Its function is as follows. Catalyzes the reduction of the delta-24 double bond of sterol intermediates during cholesterol biosynthesis. In addition to its cholesterol-synthesizing activity, can protect cells from oxidative stress by reducing caspase 3 activity during apoptosis induced by oxidative stress. Also protects against amyloid-beta peptide-induced apoptosis. The protein is Delta(24)-sterol reductase (DHCR24) of Macaca fascicularis (Crab-eating macaque).